A 478-amino-acid chain; its full sequence is Transposase for insertion sequence element IS231E (478 aa).

Belongs to the transposase 11 family.

Functionally, involved in the transposition of the insertion sequence. The protein is Transposase for insertion sequence element IS231E of Bacillus thuringiensis subsp. finitimus.